We begin with the raw amino-acid sequence, 88 residues long: Large ribosomal subunit protein bL27 (88 aa).

Positions 1–23 (MAHKKGTGSTRNGRDSNSKRLGV) are disordered.

This sequence belongs to the bacterial ribosomal protein bL27 family.

The chain is Large ribosomal subunit protein bL27 from Synechococcus sp. (strain CC9902).